The following is a 130-amino-acid chain: UPF0102 protein RPE_0358 (130 aa).

This sequence belongs to the UPF0102 family.

This chain is UPF0102 protein RPE_0358, found in Rhodopseudomonas palustris (strain BisA53).